We begin with the raw amino-acid sequence, 310 residues long: GPN-loop GTPase 2 (310 aa).

The residue at position 2 (Ala-2) is an N-acetylalanine. GTP is bound at residue 19–24; the sequence is GSGKTT. The Gly-Pro-Asn (GPN)-loop; involved in dimer interface signature appears at 76-78; sequence GPN. Residue 178-181 coordinates GTP; that stretch reads SKMD.

Belongs to the GPN-loop GTPase family. Heterodimers with GPN1 or GPN3. Binds to RNA polymerase II (RNAPII).

Small GTPase required for proper localization of RNA polymerase II and III (RNAPII and RNAPIII). May act at an RNAP assembly step prior to nuclear import. The polypeptide is GPN-loop GTPase 2 (Homo sapiens (Human)).